The sequence spans 453 residues: Adenylyltransferase and sulfurtransferase MOCS3 (453 aa).

Threonine 62 is modified (phosphothreonine). ATP-binding positions include glycine 101, aspartate 122, 129-133, lysine 146, and 190-191; these read SNFHR and DN. Zn(2+) is bound by residues cysteine 231 and cysteine 234. The Glycyl thioester intermediate; for adenylyltransferase activity role is filled by cysteine 248. 2 residues coordinate Zn(2+): cysteine 306 and cysteine 309. One can recognise a Rhodanese domain in the interval 355 to 451; that stretch reads QAKPHLLIDV…WTSNIDPNFP (97 aa). The Cysteine persulfide intermediate; for sulfurtransferase activity role is filled by cysteine 410.

It in the N-terminal section; belongs to the HesA/MoeB/ThiF family. UBA4 subfamily. Zn(2+) is required as a cofactor.

Its subcellular location is the cytoplasm. The protein localises to the cytosol. The enzyme catalyses [molybdopterin-synthase sulfur-carrier protein]-C-terminal Gly-Gly + ATP + H(+) = [molybdopterin-synthase sulfur-carrier protein]-C-terminal Gly-Gly-AMP + diphosphate. It carries out the reaction [molybdopterin-synthase sulfur-carrier protein]-C-terminal Gly-Gly-AMP + S-sulfanyl-L-cysteinyl-[cysteine desulfurase] + AH2 = [molybdopterin-synthase sulfur-carrier protein]-C-terminal-Gly-aminoethanethioate + L-cysteinyl-[cysteine desulfurase] + A + AMP + 2 H(+). It participates in tRNA modification; 5-methoxycarbonylmethyl-2-thiouridine-tRNA biosynthesis. Its pathway is cofactor biosynthesis; molybdopterin biosynthesis. Plays a central role in 2-thiolation of mcm(5)S(2)U at tRNA wobble positions of cytosolic tRNA(Lys), tRNA(Glu) and tRNA(Gln). Also essential during biosynthesis of the molybdenum cofactor. Acts by mediating the C-terminal thiocarboxylation of sulfur carriers URM1 and MOCS2A. Its N-terminus first activates URM1 and MOCS2A as acyl-adenylates (-COAMP), then the persulfide sulfur on the catalytic cysteine is transferred to URM1 and MOCS2A to form thiocarboxylation (-COSH) of their C-terminus. The reaction probably involves hydrogen sulfide that is generated from the persulfide intermediate and that acts as a nucleophile towards URM1 and MOCS2A. Subsequently, a transient disulfide bond is formed. Does not use thiosulfate as sulfur donor; NFS1 probably acting as a sulfur donor for thiocarboxylation reactions. This Drosophila sechellia (Fruit fly) protein is Adenylyltransferase and sulfurtransferase MOCS3.